The primary structure comprises 369 residues: Choline-phosphate cytidylyltransferase B (369 aa).

The segment at 1 to 27 (MPVLTTDAESETGIPKSLSNEPPSETM) is disordered. I84, F85, H92, and K122 together coordinate CTP. The phosphocholine site is built by K122 and W151. CTP contacts are provided by H168, D169, Y173, Q195, R196, T197, and I200. The segment at 309 to 369 (RMLQALSPKQ…SMSEGDEDEK (61 aa)) is disordered. Phosphoserine is present on residues S315, S319, S322, S323, S329, S331, and S335. The segment covering 319–339 (SPVSSPTRSRSPSRSPSPTFS) has biased composition (low complexity). T345 carries the phosphothreonine modification. S346, S349, S350, S355, S360, and S362 each carry phosphoserine. A compositionally biased stretch (low complexity) spans 351–362 (PKAASASISSMS).

This sequence belongs to the cytidylyltransferase family. In terms of assembly, homodimer. In terms of tissue distribution, highly expressed in brain (at protein level). Expressed in liver (at protein level). Expressed at lower levels in lung and gonads. Expressed in brain (at protein level). Expressed at lower levels in lung and gonads.

The protein resides in the endoplasmic reticulum. It is found in the cytoplasm. It catalyses the reaction phosphocholine + CTP + H(+) = CDP-choline + diphosphate. It functions in the pathway phospholipid metabolism; phosphatidylcholine biosynthesis; phosphatidylcholine from phosphocholine: step 1/2. Catalyzes the key rate-limiting step in the CDP-choline pathway for phosphatidylcholine biosynthesis. Plays an important role in ovary maturation and the maintenance of sperm production. Functionally, catalyzes the key rate-limiting step in the CDP-choline pathway for phosphatidylcholine biosynthesis. This chain is Choline-phosphate cytidylyltransferase B (Pcyt1b), found in Mus musculus (Mouse).